Consider the following 364-residue polypeptide: MTNTAARRSTGEAQLLPLPSIYSLTLDELKEWLVAHGEKPFRATQIYEWLYGKRVTDFAEMTNLPKRLREQLASAFSITTLKTIVKQTSKDGTIKFLFELHDGYSIETVLMRHNYGNSVCVTTQVGCRIGCTFCASTLGGLKRHLEAGEIVAQVVQVQKALDETEERVSSIVVMGIGEPFDNYDALIKFLRIVNHSKGLNIGARHITVSTSGIIPKIYQFADEGMQINFAISLHAPTTELRTKLMPINKAYPLPKLMEAVRYYIEKTGRRVTFEYGLFGGVNDQLEHAEQLAELLKGLKCHVNLIPVNYVPERNYVRTPRNQIFAFERALKKHGINVTIRREHGHDIDAACGQLRAKERKEETR.

Catalysis depends on E107, which acts as the Proton acceptor. Positions 113-346 (HNYGNSVCVT…VTIRREHGHD (234 aa)) constitute a Radical SAM core domain. An intrachain disulfide couples C120 to C351. Residues C127, C131, and C134 each contribute to the [4Fe-4S] cluster site. S-adenosyl-L-methionine-binding positions include 177–178 (GE), S209, 232–234 (SLH), and N308. The active-site S-methylcysteine intermediate is C351.

It belongs to the radical SAM superfamily. RlmN family. Requires [4Fe-4S] cluster as cofactor.

Its subcellular location is the cytoplasm. It catalyses the reaction adenosine(2503) in 23S rRNA + 2 reduced [2Fe-2S]-[ferredoxin] + 2 S-adenosyl-L-methionine = 2-methyladenosine(2503) in 23S rRNA + 5'-deoxyadenosine + L-methionine + 2 oxidized [2Fe-2S]-[ferredoxin] + S-adenosyl-L-homocysteine. The enzyme catalyses adenosine(37) in tRNA + 2 reduced [2Fe-2S]-[ferredoxin] + 2 S-adenosyl-L-methionine = 2-methyladenosine(37) in tRNA + 5'-deoxyadenosine + L-methionine + 2 oxidized [2Fe-2S]-[ferredoxin] + S-adenosyl-L-homocysteine. Its function is as follows. Specifically methylates position 2 of adenine 2503 in 23S rRNA and position 2 of adenine 37 in tRNAs. In Geobacillus thermodenitrificans (strain NG80-2), this protein is Probable dual-specificity RNA methyltransferase RlmN.